The chain runs to 310 residues: Ribose-phosphate pyrophosphokinase (310 aa).

Residues 34–36 (DQE) and 93–94 (RQ) contribute to the ATP site. Mg(2+)-binding residues include His127 and Asp167. The active site involves Lys190. Residues Arg192, Asp216, and 220–224 (DSGGT) each bind D-ribose 5-phosphate.

It belongs to the ribose-phosphate pyrophosphokinase family. Class I subfamily. Homohexamer. Mg(2+) is required as a cofactor.

It localises to the cytoplasm. It carries out the reaction D-ribose 5-phosphate + ATP = 5-phospho-alpha-D-ribose 1-diphosphate + AMP + H(+). It participates in metabolic intermediate biosynthesis; 5-phospho-alpha-D-ribose 1-diphosphate biosynthesis; 5-phospho-alpha-D-ribose 1-diphosphate from D-ribose 5-phosphate (route I): step 1/1. Involved in the biosynthesis of the central metabolite phospho-alpha-D-ribosyl-1-pyrophosphate (PRPP) via the transfer of pyrophosphoryl group from ATP to 1-hydroxyl of ribose-5-phosphate (Rib-5-P). This chain is Ribose-phosphate pyrophosphokinase, found in Agrobacterium fabrum (strain C58 / ATCC 33970) (Agrobacterium tumefaciens (strain C58)).